Consider the following 232-residue polypeptide: 7-cyano-7-deazaguanine synthase (232 aa).

An ATP-binding site is contributed by 7–17 (CSGGLDSVSLA). Residues cysteine 185, cysteine 193, cysteine 196, and cysteine 199 each coordinate Zn(2+).

Belongs to the QueC family. The cofactor is Zn(2+).

It catalyses the reaction 7-carboxy-7-deazaguanine + NH4(+) + ATP = 7-cyano-7-deazaguanine + ADP + phosphate + H2O + H(+). It participates in purine metabolism; 7-cyano-7-deazaguanine biosynthesis. Catalyzes the ATP-dependent conversion of 7-carboxy-7-deazaguanine (CDG) to 7-cyano-7-deazaguanine (preQ(0)). This chain is 7-cyano-7-deazaguanine synthase, found in Brucella anthropi (strain ATCC 49188 / DSM 6882 / CCUG 24695 / JCM 21032 / LMG 3331 / NBRC 15819 / NCTC 12168 / Alc 37) (Ochrobactrum anthropi).